We begin with the raw amino-acid sequence, 145 residues long: Basic phospholipase A2 textilotoxin A chain (145 aa).

Positions 1-19 (MHPAHLLVLLGVCVSLLGA) are cleaved as a signal peptide. The propeptide occupies 20-27 (SDIPPLPL). Disulfide bonds link Cys38–Cys98, Cys54–Cys144, Cys56–Cys72, Cys71–Cys125, Cys78–Cys118, Cys87–Cys111, and Cys105–Cys116. Residues Tyr55, Gly57, and Gly59 each contribute to the Ca(2+) site. His75 is a catalytic residue. Position 76 (Asp76) interacts with Ca(2+). Asp119 is an active-site residue.

Belongs to the phospholipase A2 family. Group I subfamily. D49 sub-subfamily. In terms of assembly, heterohexamer. 2 forms exist: 2 A or 2 B chains, 2 C chains and 2 covalently-linked D chains, and 1 A or 1 B, 1 C, 2 covalently-linked D chains and 2 differentially glycosylated covalently-linked D chains. Textilotoxin was originally described as pentameric. It depends on Ca(2+) as a cofactor. Expressed by the venom gland.

Its subcellular location is the secreted. The catalysed reaction is a 1,2-diacyl-sn-glycero-3-phosphocholine + H2O = a 1-acyl-sn-glycero-3-phosphocholine + a fatty acid + H(+). Its function is as follows. Snake venom oligomeric phospholipase A2 that has potent presynaptic neurotoxicity. Chain A possesses a very low toxicity, but is essential for neurotoxicity. Possesses a low enzymatic activity. PLA2 catalyzes the calcium-dependent hydrolysis of the 2-acyl groups in 3-sn-phosphoglycerides. The chain is Basic phospholipase A2 textilotoxin A chain from Pseudonaja textilis (Eastern brown snake).